Consider the following 457-residue polypeptide: MTKKVYVKTFGCQMNEYDSDKMVDVLNAAEGLEKTDTPEDADIILFNTCSVREKAQEKVFSDLGRVRELKEAKPGLLIGVGGCVASQEGASIVSRAPYVDLVFGPQTLHRLPQMIDQRRASGRAQVDISFPEIEKFDHLPPARVEGPSAFVSIMEGCSKYCSYCVVPYTRGDEVSRPLDDVLTEVAGLADQGVREVTLLGQNVNAYRGALTAGSTEIADFATLIEYVADIPGIERIRYTTSHPKEFTQRLIDTYAKVPKLVSHLHLPVQHGSDRILMAMKRGYTVLEYKSVIRKLRAIRPDLSLSTDMIVGFPGETEEDFDKMMALVHEMSYDTSFSFIYSPRPGTPAANLHDDTPREVKLKRLQHLQATIEENVARISRSMVGKVERILVEGPSRKDPNELSGRTENNRVVNFPAPLASHPRLIGQMIDVKINHAYPHSLRGELLLVSDDASAATH.

Residues 3–120 form the MTTase N-terminal domain; it reads KKVYVKTFGC…LPQMIDQRRA (118 aa). 6 residues coordinate [4Fe-4S] cluster: Cys12, Cys49, Cys83, Cys157, Cys161, and Cys164. The 235-residue stretch at 143–377 folds into the Radical SAM core domain; the sequence is RVEGPSAFVS…QATIEENVAR (235 aa). Positions 380 to 447 constitute a TRAM domain; that stretch reads RSMVGKVERI…PHSLRGELLL (68 aa).

Belongs to the methylthiotransferase family. MiaB subfamily. Monomer. [4Fe-4S] cluster serves as cofactor.

Its subcellular location is the cytoplasm. It catalyses the reaction N(6)-dimethylallyladenosine(37) in tRNA + (sulfur carrier)-SH + AH2 + 2 S-adenosyl-L-methionine = 2-methylsulfanyl-N(6)-dimethylallyladenosine(37) in tRNA + (sulfur carrier)-H + 5'-deoxyadenosine + L-methionine + A + S-adenosyl-L-homocysteine + 2 H(+). Its function is as follows. Catalyzes the methylthiolation of N6-(dimethylallyl)adenosine (i(6)A), leading to the formation of 2-methylthio-N6-(dimethylallyl)adenosine (ms(2)i(6)A) at position 37 in tRNAs that read codons beginning with uridine. The chain is tRNA-2-methylthio-N(6)-dimethylallyladenosine synthase from Burkholderia ambifaria (strain ATCC BAA-244 / DSM 16087 / CCUG 44356 / LMG 19182 / AMMD) (Burkholderia cepacia (strain AMMD)).